The chain runs to 682 residues: Serine/threonine-protein kinase PLK2 (682 aa).

The disordered stretch occupies residues 25–67 (ACGGDSKKKRPQQPSEDGQSQAQVTPAAPHHHHHHSHSGPEIS). The segment covering 36 to 48 (QQPSEDGQSQAQV) has biased composition (polar residues). In terms of domain architecture, Protein kinase spans 79–331 (YCRGKVLGKG…LDDIIRHDFF (253 aa)). ATP is bound by residues 85-93 (LGKGGFAKC) and Lys-108. Asp-202 functions as the Proton acceptor in the catalytic mechanism. A Phosphothreonine modification is found at Thr-236. The disordered stretch occupies residues 402–430 (TSITQQPSKHRTDEELQPPPTTFAKSGTS). POLO box domains follow at residues 500 to 578 (WVTK…YMEE) and 598 to 682 (YLLQ…QRCN).

Belongs to the protein kinase superfamily. Ser/Thr protein kinase family. CDC5/Polo subfamily. In terms of assembly, interacts with CIB1. Interacts with NSF; causing NSF dissociation from GRIA2. Catalytic activity is enhanced by phosphorylation of Thr-236.

The protein resides in the cytoplasm. It localises to the cytoskeleton. Its subcellular location is the microtubule organizing center. It is found in the centrosome. The protein localises to the centriole. The protein resides in the cell projection. It localises to the dendrite. The enzyme catalyses L-seryl-[protein] + ATP = O-phospho-L-seryl-[protein] + ADP + H(+). It carries out the reaction L-threonyl-[protein] + ATP = O-phospho-L-threonyl-[protein] + ADP + H(+). Its activity is regulated as follows. Activated by phosphorylation of Thr-236. Once activated, activity is stimulated by binding target proteins. In terms of biological role, tumor suppressor serine/threonine-protein kinase involved in synaptic plasticity, centriole duplication and G1/S phase transition. Polo-like kinases act by binding and phosphorylating proteins that are already phosphorylated on a specific motif recognized by the POLO box domains. Phosphorylates CPAP, NPM1, RAPGEF2, RASGRF1, SNCA, SIPA1L1 and SYNGAP1. Plays a key role in synaptic plasticity and memory by regulating the Ras and Rap protein signaling: required for overactivity-dependent spine remodeling by phosphorylating the Ras activator RASGRF1 and the Rap inhibitor SIPA1L1 leading to their degradation by the proteasome. Conversely, phosphorylates the Rap activator RAPGEF2 and the Ras inhibitor SYNGAP1, promoting their activity. Also regulates synaptic plasticity independently of kinase activity, via its interaction with NSF that disrupts the interaction between NSF and the GRIA2 subunit of AMPARs, leading to a rapid rundown of AMPAR-mediated current that occludes long term depression. Required for procentriole formation and centriole duplication by phosphorylating CPAP and NPM1, respectively. Its induction by p53/TP53 suggests that it may participate in the mitotic checkpoint following stress. This chain is Serine/threonine-protein kinase PLK2 (Plk2), found in Rattus norvegicus (Rat).